The following is a 260-amino-acid chain: Phytolongin Phyl2.1 (260 aa).

The Longin domain maps to 12-114; that stretch reads CIAKGTVILA…LDNPTQHCLQ (103 aa). Residues 231 to 251 form a helical; Anchor for type IV membrane protein membrane-spanning segment; sequence WIVLMFDLCICLVLFGIWLWI.

It belongs to the synaptobrevin family.

Its subcellular location is the membrane. Functionally, non-SNARE longin protein involved in membrane-trafficking machinery. This Arabidopsis thaliana (Mouse-ear cress) protein is Phytolongin Phyl2.1.